The chain runs to 210 residues: Adenylate kinase (210 aa).

An ATP-binding site is contributed by 10 to 15 (GSGKGT). Positions 30-59 (STGDLFRANISNATPLGKEIKQIVENGQLV) are NMP. AMP contacts are provided by residues Thr-31, Arg-36, 57 to 59 (QLV), 85 to 88 (GFPR), and Gln-92. The tract at residues 121–158 (GRRICQSCGGIFNIYTLPTKEKGICDLCKGSLYQRKDD) is LID. Arg-122 lines the ATP pocket. The Zn(2+) site is built by Cys-125 and Cys-128. An ATP-binding site is contributed by 131 to 132 (IF). 2 residues coordinate Zn(2+): Cys-145 and Cys-148. AMP-binding residues include Arg-155 and Arg-166. ATP is bound at residue Lys-194.

It belongs to the adenylate kinase family. As to quaternary structure, monomer.

The protein resides in the cytoplasm. It catalyses the reaction AMP + ATP = 2 ADP. Its pathway is purine metabolism; AMP biosynthesis via salvage pathway; AMP from ADP: step 1/1. Its function is as follows. Catalyzes the reversible transfer of the terminal phosphate group between ATP and AMP. Plays an important role in cellular energy homeostasis and in adenine nucleotide metabolism. This is Adenylate kinase from Borrelia turicatae (strain 91E135).